Reading from the N-terminus, the 329-residue chain is Urease accessory protein UreD 2 (329 aa).

Residues 100 to 120 (YSRPSDSSKFTNGTQSANSNT) form a disordered region. A compositionally biased stretch (polar residues) spans 103 to 120 (PSDSSKFTNGTQSANSNT).

It belongs to the UreD family. In terms of assembly, ureD, UreF and UreG form a complex that acts as a GTP-hydrolysis-dependent molecular chaperone, activating the urease apoprotein by helping to assemble the nickel containing metallocenter of UreC. The UreE protein probably delivers the nickel.

Its subcellular location is the cytoplasm. Functionally, required for maturation of urease via the functional incorporation of the urease nickel metallocenter. The sequence is that of Urease accessory protein UreD 2 from Psychrobacter cryohalolentis (strain ATCC BAA-1226 / DSM 17306 / VKM B-2378 / K5).